A 68-amino-acid polypeptide reads, in one-letter code: Large ribosomal subunit protein uL29c (68 aa).

This sequence belongs to the universal ribosomal protein uL29 family.

Its subcellular location is the plastid. The protein resides in the chloroplast. This is Large ribosomal subunit protein uL29c from Pyropia yezoensis (Susabi-nori).